The sequence spans 365 residues: Isoflavone 4'-O-methyltransferase (365 aa).

S-adenosyl-L-methionine-binding positions include 207 to 210 (VAGG), Asp231, 231 to 232 (DQ), 251 to 252 (DM), and Lys265. The active-site Proton acceptor is His269.

It belongs to the class I-like SAM-binding methyltransferase superfamily. Cation-independent O-methyltransferase family. COMT subfamily.

The catalysed reaction is a 4'-hydroxyisoflavone + S-adenosyl-L-methionine = a 4'-methoxyisoflavone + S-adenosyl-L-homocysteine + H(+). It catalyses the reaction (2R,3S)-2,4',7-trihydroxyisoflavanone + S-adenosyl-L-methionine = (2R,3S)-2,7-dihydroxy-4'-methoxyisoflavanone + S-adenosyl-L-homocysteine + H(+). Its function is as follows. 2-hydroxyisoflavanone 4'-O-methyltransferase involved in the biosynthesis of formononetin. Can use 2,7,4'-trihydroxyisoflavanone as substrate, but not daidzein. This is Isoflavone 4'-O-methyltransferase (HI4'OMT) from Lotus japonicus (Lotus corniculatus var. japonicus).